The chain runs to 191 residues: Lipopolysaccharide export system protein LptC (191 aa).

Residues 7–25 (WVIIVLSLAVLVMIGINMA) form a helical membrane-spanning segment.

It belongs to the LptC family. As to quaternary structure, component of the lipopolysaccharide transport and assembly complex. Interacts with LptA and the LptBFG transporter complex.

It is found in the cell inner membrane. Involved in the assembly of lipopolysaccharide (LPS). Required for the translocation of LPS from the inner membrane to the outer membrane. Facilitates the transfer of LPS from the inner membrane to the periplasmic protein LptA. Could be a docking site for LptA. This chain is Lipopolysaccharide export system protein LptC, found in Escherichia coli O157:H7.